The chain runs to 320 residues: Mitochondrial glycine transporter (320 aa).

Solcar repeat units follow at residues 8–92 (SKTT…LRQG), 121–205 (LSNW…LKRR), and 223–307 (SSSS…LILR). The next 6 membrane-spanning stretches (helical) occupy residues 14–39 (FAAG…TRVQ), 67–93 (GTLP…RQGL), 127–152 (LATG…VRYE), 180–203 (GFGA…EQLK), 227–253 (INFV…KTRL), and 282–300 (GLGL…AWTV).

The protein belongs to the mitochondrial carrier (TC 2.A.29) family. SLC25A38 subfamily.

The protein localises to the mitochondrion inner membrane. The catalysed reaction is glycine(in) = glycine(out). In terms of biological role, mitochondrial glycine transporter that imports glycine into the mitochondrial matrix. Plays an important role in providing glycine for the first enzymatic step in heme biosynthesis, the condensation of glycine with succinyl-CoA to produce 5-aminolevulinate (ALA) in the mitochondrial matrix. The chain is Mitochondrial glycine transporter from Aspergillus fumigatus (strain CBS 144.89 / FGSC A1163 / CEA10) (Neosartorya fumigata).